A 714-amino-acid polypeptide reads, in one-letter code: Testis-expressed protein 13D (714 aa).

2 disordered regions span residues 300 to 419 (GSFP…GCSD) and 431 to 675 (RRCK…PASF). Basic and acidic residues-rich tracts occupy residues 307-320 (SRSH…ERSQ) and 366-378 (GNRE…EGPK). Residues 379-392 (RARRMHTLVFRRSH) show a composition bias toward basic residues. Residues 403 to 416 (TVPQGDSRSYSQEG) are compositionally biased toward polar residues. Composition is skewed to basic and acidic residues over residues 495-505 (CKPEEGPERPQ), 557-567 (CKPEEGPERPQ), and 636-646 (SRSHGVRESPK). A RanBP2-type zinc finger spans residues 677–706 (VPVNWKCPWCKAINFSWRTACYKCKKACVP).

This sequence belongs to the TEX13 family.

In Homo sapiens (Human), this protein is Testis-expressed protein 13D.